The following is a 730-amino-acid chain: Dual function macrocyclase-peptidase POPB (730 aa).

Positions Met-1–Pro-34 are disordered. Catalysis depends on charge relay system residues Ser-577, Asp-661, and His-698.

The protein belongs to the peptidase S9A family. In terms of assembly, monomer.

It carries out the reaction Hydrolysis of Pro-|-Xaa &gt;&gt; Ala-|-Xaa in oligopeptides.. Its function is as follows. Dual function macrocyclase-peptidase involved in the biosynthesis of the highly toxic amanitin toxin family of macrocycles. Cleaves peptide bonds on the C-terminal side of prolyl residues. The enzyme first removes 10 residues from the N-terminus of a 35-residue substrate. Conformational trapping of the 25 amino-acid peptide forces the enzyme to release this intermediate rather than proceed to macrocyclization. The enzyme rebinds the 25 amino-acid peptide in a different conformation and catalyzes macrocyclization of the N-terminal eight residues. The sequence is that of Dual function macrocyclase-peptidase POPB from Galerina marginata (strain CBS 339.88).